We begin with the raw amino-acid sequence, 359 residues long: UDP-3-O-acylglucosamine N-acyltransferase (359 aa).

The Proton acceptor role is filled by His-247.

This sequence belongs to the transferase hexapeptide repeat family. LpxD subfamily. Homotrimer.

It catalyses the reaction a UDP-3-O-[(3R)-3-hydroxyacyl]-alpha-D-glucosamine + a (3R)-hydroxyacyl-[ACP] = a UDP-2-N,3-O-bis[(3R)-3-hydroxyacyl]-alpha-D-glucosamine + holo-[ACP] + H(+). It functions in the pathway bacterial outer membrane biogenesis; LPS lipid A biosynthesis. Catalyzes the N-acylation of UDP-3-O-acylglucosamine using 3-hydroxyacyl-ACP as the acyl donor. Is involved in the biosynthesis of lipid A, a phosphorylated glycolipid that anchors the lipopolysaccharide to the outer membrane of the cell. The sequence is that of UDP-3-O-acylglucosamine N-acyltransferase from Chlorobium chlorochromatii (strain CaD3).